We begin with the raw amino-acid sequence, 408 residues long: Arginine biosynthesis bifunctional protein ArgJ 1 (408 aa).

Substrate-binding residues include T154, K180, T191, E277, N403, and S408. Catalysis depends on T191, which acts as the Nucleophile.

Belongs to the ArgJ family. Heterotetramer of two alpha and two beta chains.

The protein resides in the cytoplasm. The enzyme catalyses N(2)-acetyl-L-ornithine + L-glutamate = N-acetyl-L-glutamate + L-ornithine. The catalysed reaction is L-glutamate + acetyl-CoA = N-acetyl-L-glutamate + CoA + H(+). It participates in amino-acid biosynthesis; L-arginine biosynthesis; L-ornithine and N-acetyl-L-glutamate from L-glutamate and N(2)-acetyl-L-ornithine (cyclic): step 1/1. It functions in the pathway amino-acid biosynthesis; L-arginine biosynthesis; N(2)-acetyl-L-ornithine from L-glutamate: step 1/4. Functionally, catalyzes two activities which are involved in the cyclic version of arginine biosynthesis: the synthesis of N-acetylglutamate from glutamate and acetyl-CoA as the acetyl donor, and of ornithine by transacetylation between N(2)-acetylornithine and glutamate. This is Arginine biosynthesis bifunctional protein ArgJ 1 from Clostridium acetobutylicum (strain ATCC 824 / DSM 792 / JCM 1419 / IAM 19013 / LMG 5710 / NBRC 13948 / NRRL B-527 / VKM B-1787 / 2291 / W).